We begin with the raw amino-acid sequence, 201 residues long: Peptidyl-tRNA hydrolase (201 aa).

A tRNA-binding site is contributed by Y15. The active-site Proton acceptor is H20. TRNA-binding residues include Y66, N68, and N114.

This sequence belongs to the PTH family. In terms of assembly, monomer.

The protein localises to the cytoplasm. It carries out the reaction an N-acyl-L-alpha-aminoacyl-tRNA + H2O = an N-acyl-L-amino acid + a tRNA + H(+). Hydrolyzes ribosome-free peptidyl-tRNAs (with 1 or more amino acids incorporated), which drop off the ribosome during protein synthesis, or as a result of ribosome stalling. In terms of biological role, catalyzes the release of premature peptidyl moieties from peptidyl-tRNA molecules trapped in stalled 50S ribosomal subunits, and thus maintains levels of free tRNAs and 50S ribosomes. The sequence is that of Peptidyl-tRNA hydrolase from Burkholderia thailandensis (strain ATCC 700388 / DSM 13276 / CCUG 48851 / CIP 106301 / E264).